A 314-amino-acid polypeptide reads, in one-letter code: uncharacterized protein (314 aa).

The transit peptide at 1–29 directs the protein to the mitochondrion; it reads MMRLIRTLPLRCFKTRIRRQGSLLCLRCF. The disordered stretch occupies residues 52–74; the sequence is SSSPLSKNKEKQEKPEKENEGKH. The span at 58–74 shows a compositional bias: basic and acidic residues; that stretch reads KNKEKQEKPEKENEGKH. A coiled-coil region spans residues 177–207; it reads LNEHHLQLLKLKRELNSIHDELNEIIIDLLQ. A helical membrane pass occupies residues 262-279; it reads GLLVILVLVCSIMIGVSA. Positions 281–314 are disordered; that stretch reads KKERPGLQEPEEPEILAPKEDIDTTFPQDQHDID.

The protein resides in the mitochondrion membrane. This is an uncharacterized protein from Saccharomyces cerevisiae (strain ATCC 204508 / S288c) (Baker's yeast).